The chain runs to 198 residues: Phosphoheptose isomerase (198 aa).

An SIS domain is found at 36–198; it reads MIGSLLNNGK…DCLLLGVEDQ (163 aa). A substrate-binding site is contributed by 51–53; that stretch reads NGG. Zn(2+) contacts are provided by histidine 60 and glutamate 64. Substrate contacts are provided by residues glutamate 64, 93–94, 119–121, serine 124, and glutamine 174; these read ND and STS. Residues glutamine 174 and histidine 182 each coordinate Zn(2+).

This sequence belongs to the SIS family. GmhA subfamily. Homotetramer. It depends on Zn(2+) as a cofactor.

It is found in the cytoplasm. It catalyses the reaction 2 D-sedoheptulose 7-phosphate = D-glycero-alpha-D-manno-heptose 7-phosphate + D-glycero-beta-D-manno-heptose 7-phosphate. It functions in the pathway carbohydrate biosynthesis; D-glycero-D-manno-heptose 7-phosphate biosynthesis; D-glycero-alpha-D-manno-heptose 7-phosphate and D-glycero-beta-D-manno-heptose 7-phosphate from sedoheptulose 7-phosphate: step 1/1. Catalyzes the isomerization of sedoheptulose 7-phosphate in D-glycero-D-manno-heptose 7-phosphate. The polypeptide is Phosphoheptose isomerase (Aromatoleum aromaticum (strain DSM 19018 / LMG 30748 / EbN1) (Azoarcus sp. (strain EbN1))).